The primary structure comprises 209 residues: Large ribosomal subunit protein uL3 (209 aa).

Belongs to the universal ribosomal protein uL3 family. In terms of assembly, part of the 50S ribosomal subunit. Forms a cluster with proteins L14 and L19.

Its function is as follows. One of the primary rRNA binding proteins, it binds directly near the 3'-end of the 23S rRNA, where it nucleates assembly of the 50S subunit. The polypeptide is Large ribosomal subunit protein uL3 (Brevibacillus brevis (strain 47 / JCM 6285 / NBRC 100599)).